We begin with the raw amino-acid sequence, 611 residues long: Dihydroxy-acid dehydratase (611 aa).

Residue Asp81 coordinates Mg(2+). Position 122 (Cys122) interacts with [2Fe-2S] cluster. Mg(2+) is bound by residues Asp123 and Lys124. Lys124 carries the N6-carboxylysine modification. Position 195 (Cys195) interacts with [2Fe-2S] cluster. Mg(2+) is bound at residue Glu491. Ser517 serves as the catalytic Proton acceptor.

This sequence belongs to the IlvD/Edd family. As to quaternary structure, homodimer. It depends on [2Fe-2S] cluster as a cofactor. Mg(2+) is required as a cofactor.

It catalyses the reaction (2R)-2,3-dihydroxy-3-methylbutanoate = 3-methyl-2-oxobutanoate + H2O. The catalysed reaction is (2R,3R)-2,3-dihydroxy-3-methylpentanoate = (S)-3-methyl-2-oxopentanoate + H2O. It participates in amino-acid biosynthesis; L-isoleucine biosynthesis; L-isoleucine from 2-oxobutanoate: step 3/4. The protein operates within amino-acid biosynthesis; L-valine biosynthesis; L-valine from pyruvate: step 3/4. In terms of biological role, functions in the biosynthesis of branched-chain amino acids. Catalyzes the dehydration of (2R,3R)-2,3-dihydroxy-3-methylpentanoate (2,3-dihydroxy-3-methylvalerate) into 2-oxo-3-methylpentanoate (2-oxo-3-methylvalerate) and of (2R)-2,3-dihydroxy-3-methylbutanoate (2,3-dihydroxyisovalerate) into 2-oxo-3-methylbutanoate (2-oxoisovalerate), the penultimate precursor to L-isoleucine and L-valine, respectively. The protein is Dihydroxy-acid dehydratase of Brucella suis (strain ATCC 23445 / NCTC 10510).